The following is a 510-amino-acid chain: ATP synthase subunit alpha (510 aa).

169 to 176 (GDRQTGKT) contacts ATP.

Belongs to the ATPase alpha/beta chains family. F-type ATPases have 2 components, CF(1) - the catalytic core - and CF(0) - the membrane proton channel. CF(1) has five subunits: alpha(3), beta(3), gamma(1), delta(1), epsilon(1). CF(0) has three main subunits: a(1), b(2) and c(9-12). The alpha and beta chains form an alternating ring which encloses part of the gamma chain. CF(1) is attached to CF(0) by a central stalk formed by the gamma and epsilon chains, while a peripheral stalk is formed by the delta and b chains.

Its subcellular location is the cell inner membrane. It carries out the reaction ATP + H2O + 4 H(+)(in) = ADP + phosphate + 5 H(+)(out). Produces ATP from ADP in the presence of a proton gradient across the membrane. The alpha chain is a regulatory subunit. The sequence is that of ATP synthase subunit alpha from Azorhizobium caulinodans (strain ATCC 43989 / DSM 5975 / JCM 20966 / LMG 6465 / NBRC 14845 / NCIMB 13405 / ORS 571).